A 188-amino-acid chain; its full sequence is Methionine aminopeptidase (188 aa).

A substrate-binding site is contributed by His60. The a divalent metal cation site is built by Asp80, Asp91, and His164. Residue His172 participates in substrate binding.

It belongs to the peptidase M24A family. Methionine aminopeptidase archaeal type 2 subfamily. In terms of assembly, monomer. Requires Co(2+) as cofactor. Zn(2+) serves as cofactor. It depends on Mn(2+) as a cofactor. Fe(2+) is required as a cofactor.

The catalysed reaction is Release of N-terminal amino acids, preferentially methionine, from peptides and arylamides.. Functionally, removes the N-terminal methionine from nascent proteins. The N-terminal methionine is often cleaved when the second residue in the primary sequence is small and uncharged (Met-Ala-, Cys, Gly, Pro, Ser, Thr, or Val). The chain is Methionine aminopeptidase (map) from Methanothermus fervidus.